The following is a 618-amino-acid chain: Probable N-acetylgalactosaminyltransferase 6 (618 aa).

Over 1-16 the chain is Cytoplasmic; sequence MIASLIRSRRRSRRCV. Residues 17-39 form a helical; Signal-anchor for type II membrane protein membrane-spanning segment; it reads VYSVFLFGFLALWGSFALALVFL. The Lumenal portion of the chain corresponds to 40–618; it reads SDMYIGEDQI…TEMSWLPEHP (579 aa). Residues Asn81 and Asn149 are each glycosylated (N-linked (GlcNAc...) asparagine). Intrachain disulfides connect Cys147–Cys381 and Cys372–Cys452. The interval 156-267 is catalytic subdomain A; that stretch reads LPTTSVIIVY…KGWLEPLLTR (112 aa). 2 residues coordinate substrate: Asp197 and Arg228. Asp251 provides a ligand contact to Mn(2+). Substrate is bound at residue Ser252. His253 serves as a coordination point for Mn(2+). Residues 327–389 are catalytic subdomain B; sequence PIESPTMAGG…PCSHVGHVFR (63 aa). Position 358 (Trp358) interacts with substrate. Position 386 (His386) interacts with Mn(2+). Arg389 contacts substrate. The 136-residue stretch at 474 to 609 folds into the Ricin B-type lectin domain; it reads RFGRMTSSSN…SNDRQNWTIT (136 aa). Asn483 is a glycosylation site (N-linked (GlcNAc...) asparagine). Disulfide bonds link Cys487-Cys505, Cys530-Cys550, and Cys575-Cys597. N-linked (GlcNAc...) asparagine glycosylation is present at Asn605.

The protein belongs to the glycosyltransferase 2 family. GalNAc-T subfamily. Mn(2+) is required as a cofactor.

Its subcellular location is the golgi apparatus membrane. Its pathway is protein modification; protein glycosylation. Functionally, probable glycopeptide transferase involved in O-linked oligosaccharide biosynthesis. Glycopeptide transferases catalyze the transfer of an N-acetyl-D-galactosamine residue to an already glycosylated peptide. In contrast to other members of the family, it does not act as a peptide transferase that transfers GalNAc onto serine or threonine residue on peptides that have been tested. Some peptide transferase activity is however not excluded, considering that its appropriate peptide substrate may remain unidentified. The polypeptide is Probable N-acetylgalactosaminyltransferase 6 (gly-6) (Caenorhabditis elegans).